Reading from the N-terminus, the 389-residue chain is Chalcone synthase 4-2 (389 aa).

Cysteine 164 is an active-site residue.

This sequence belongs to the thiolase-like superfamily. Chalcone/stilbene synthases family.

The enzyme catalyses (E)-4-coumaroyl-CoA + 3 malonyl-CoA + 3 H(+) = 2',4,4',6'-tetrahydroxychalcone + 3 CO2 + 4 CoA. It participates in secondary metabolite biosynthesis; flavonoid biosynthesis. Functionally, the primary product of this enzyme is 4,2',4',6'-tetrahydroxychalcone (also termed naringenin-chalcone or chalcone) which can under specific conditions spontaneously isomerize into naringenin. The sequence is that of Chalcone synthase 4-2 (CHS4-2) from Medicago sativa (Alfalfa).